The following is a 119-amino-acid chain: Ribonuclease P protein component (119 aa).

Residues 1 to 20 (MLPAQHRMTRSTEFGATVSK) are disordered.

It belongs to the RnpA family. In terms of assembly, consists of a catalytic RNA component (M1 or rnpB) and a protein subunit.

The enzyme catalyses Endonucleolytic cleavage of RNA, removing 5'-extranucleotides from tRNA precursor.. Functionally, RNaseP catalyzes the removal of the 5'-leader sequence from pre-tRNA to produce the mature 5'-terminus. It can also cleave other RNA substrates such as 4.5S RNA. The protein component plays an auxiliary but essential role in vivo by binding to the 5'-leader sequence and broadening the substrate specificity of the ribozyme. This Mycolicibacterium vanbaalenii (strain DSM 7251 / JCM 13017 / BCRC 16820 / KCTC 9966 / NRRL B-24157 / PYR-1) (Mycobacterium vanbaalenii) protein is Ribonuclease P protein component.